A 179-amino-acid chain; its full sequence is Mediator of RNA polymerase II transcription subunit 28 (179 aa).

A disordered region spans residues 1–43 (MASSMCGMFPGQQPPGSLPPPGPGGPGQPGLLTGTPGNRGANN). Residues 12 to 26 (QQPPGSLPPPGPGGP) show a composition bias toward pro residues. Residues 109–139 (EQVEKEDASELKNELQRKEMLIQKHLAKIHH) adopt a coiled-coil conformation.

Belongs to the Mediator complex subunit 28 family. Component of the Mediator complex.

It is found in the nucleus. In terms of biological role, component of the Mediator complex, a coactivator involved in the regulated transcription of nearly all RNA polymerase II-dependent genes. Mediator functions as a bridge to convey information from gene-specific regulatory proteins to the basal RNA polymerase II transcription machinery. Mediator is recruited to promoters by direct interactions with regulatory proteins and serves as a scaffold for the assembly of a functional preinitiation complex with RNA polymerase II and the general transcription factors. This chain is Mediator of RNA polymerase II transcription subunit 28 (med28), found in Danio rerio (Zebrafish).